We begin with the raw amino-acid sequence, 752 residues long: Microtubule-associated protein tau (752 aa).

A disordered region spans residues 1–567 (MAEPRQEFDT…PVPMPDLKNV (567 aa)). Position 2 is an N-acetylalanine (Ala2). The residue at position 18 (Tyr18) is a Phosphotyrosine. A Glycyl lysine isopeptide (Lys-Gly) (interchain with G-Cter in ubiquitin) cross-link involves residue Lys33. Residues Ser35 and Ser50 each carry the phosphoserine modification. Polar residues predominate over residues 50–60 (SETSDAKSTPT). Thr58, Thr60, and Thr100 each carry phosphothreonine. A compositionally biased stretch (polar residues) spans 142–151 (SDWTHQQVPS). Residues 173–182 (RPEDVERSHP) are compositionally biased toward basic and acidic residues. Residues Ser191 and Ser204 each carry the phosphoserine modification. Residues 192–204 (PQKEAWGKDRLGS) show a composition bias toward basic and acidic residues. Over residues 205 to 218 (EEEVDEDITMDESS) the composition is skewed to acidic residues. Residues 219-229 (QESPPSQASLA) are compositionally biased toward low complexity. The segment covering 233 to 252 (ATPQARSVSASGVSGETTSI) has biased composition (polar residues). Composition is skewed to basic and acidic residues over residues 289–313 (EEGHEAAPEFTFHVEIKASAPKEQD) and 374–385 (SKDRTGNDEKKA). Polar residues-rich tracts occupy residues 387–400 (TSTPSCAKTPSNRP) and 432–446 (KYVSSVTPRNGSPGT). Position 464 is a phosphothreonine (Thr464). Arg466 carries the post-translational modification Omega-N-methylarginine. Position 474 is an N6,N6-dimethyllysine; alternate (Lys474). The residue at position 474 (Lys474) is an N6-acetyllysine; alternate. A phosphothreonine mark is found at Thr480, Thr486, and Thr487. At Ser489 the chain carries Phosphoserine. A Phosphothreonine modification is found at Thr492. Phosphoserine occurs at positions 496, 502, and 506. Positions 498–525 (EPPKSGERSGYSSPGSPGTPGSRSRTPS) are enriched in low complexity. A Phosphotyrosine modification is found at Tyr508. Phosphoserine occurs at positions 509 and 510. A Phosphoserine; by CK1, PDPK1 and TTBK1 modification is found at Ser513. Phosphothreonine occurs at positions 516 and 523. Residue Ser525 is modified to Phosphoserine. Position 528 is a phosphothreonine (Thr528). At Lys536 the chain carries N6-acetyllysine. Thr542 is subject to Phosphothreonine. A phosphoserine mark is found at Ser546 and Ser548. 4 Tau/MAP repeats span residues 555–585 (QTAPVPMPDLKNVRSKIGSTENLKHQPGGGK), 586–616 (VQIINKKLDLSNVQSKCGSKDNIKHVPGGGS), 617–647 (VHIVYKPVDLSKVTSKCGSLGNIHHKPGGGQ), and 648–679 (VEVKSEKLDFKDRVQSKIGSLDNITHVPGGGN). Lys565 is covalently cross-linked (Glycyl lysine isopeptide (Lys-Gly) (interchain with G-Cter in ubiquitin)). Position 570 is an N6-acetyllysine; alternate (Lys570). N6-methyllysine; alternate is present on Lys570. Lys570 is covalently cross-linked (Glycyl lysine isopeptide (Lys-Gly) (interchain with G-Cter in ubiquitin); alternate). At Ser573 the chain carries Phosphoserine. Lys578 is covalently cross-linked (Glycyl lysine isopeptide (Lys-Gly) (interchain with G-Cter in ubiquitin)). Position 592 is an N6-acetyllysine; alternate (Lys592). Residue Lys592 forms a Glycyl lysine isopeptide (Lys-Gly) (interchain with G-Cter in ubiquitin); alternate linkage. 2 positions are modified to phosphoserine: Ser596 and Ser600. Residue Lys601 is modified to N6-acetyllysine. The cysteines at positions 602 and 633 are disulfide-linked. Ser604 is modified (phosphoserine). N6-acetyllysine; alternate is present on Lys609. A Glycyl lysine isopeptide (Lys-Gly) (interchain with G-Cter in ubiquitin); alternate cross-link involves residue Lys609. The residue at position 616 (Ser616) is a Phosphoserine. At Lys622 the chain carries N6,N6-dimethyllysine; alternate. N6-acetyllysine; alternate is present on residues Lys622, Lys628, and Lys632. Residues Lys622, Lys628, and Lys632 each participate in a glycyl lysine isopeptide (Lys-Gly) (interchain with G-Cter in ubiquitin); alternate cross-link. The residue at position 635 (Ser635) is a Phosphoserine. An N6-acetyllysine; alternate mark is found at Lys642, Lys654, and Lys658. Residues Lys642, Lys654, and Lys658 each participate in a glycyl lysine isopeptide (Lys-Gly) (interchain with G-Cter in ubiquitin); alternate cross-link. Position 660 is an omega-N-methylarginine (Arg660). Position 663 is a phosphoserine (Ser663). Lys664 participates in a covalent cross-link: Glycyl lysine isopeptide (Lys-Gly) (interchain with G-Cter in ubiquitin). Residue Ser667 is modified to Phosphoserine. Lys680 is modified (N6-acetyllysine; alternate). A Glycyl lysine isopeptide (Lys-Gly) (interchain with G-Cter in ubiquitin); alternate cross-link involves residue Lys680. A Glycyl lysine isopeptide (Lys-Gly) (interchain with G-Cter in ubiquitin) cross-link involves residue Lys686. Lys696 is modified (N6-acetyllysine; alternate). Lys696 is covalently cross-linked (Glycyl lysine isopeptide (Lys-Gly) (interchain with G-Cter in ubiquitin); alternate). The residue at position 705 (Tyr705) is a Phosphotyrosine. Ser707 is subject to Phosphoserine; by CK1 and PDPK1. A Phosphoserine modification is found at Ser711. Thr714 is modified (phosphothreonine). The residue at position 715 (Ser715) is a Phosphoserine; by CK1 and PDPK1. Phosphoserine occurs at positions 720, 727, and 733. Thr738 carries the post-translational modification Phosphothreonine.

In terms of assembly, interacts with MARK1, MARK2, MARK3 and MARK4. Interacts with SQSTM1 when polyubiquitinated. Interacts with PSMC2 through SQSTM1. Interacts with FKBP4. Binds to CSNK1D. Interacts with SGK1. Interacts with EPM2A; the interaction dephosphorylates MAPT at Ser-388. Interacts with PIN1. Interacts with LRRK2. Interacts with LRP1, leading to endocytosis; this interaction is reduced in the presence of LRPAP1/RAP. In terms of processing, polyubiquitinated. Requires functional TRAF6 and may provoke SQSTM1-dependent degradation by the proteasome. Post-translationally, phosphorylated at various serine and threonine residues in S-P or T-P motifs by proline-directed protein kinases (PDPK1, CDK1, CDK5, GSK3, MAPK) (a few sites per protein in interphase, more in mitosis), and at serine residues in K-X-G-S motifs by MAP/microtubule affinity-regulating kinase (MARK1, MARK2, MARK3, MARK4), causing detachment from microtubules, and their disassembly. Fetal Tau is much more phosphorylated than adult Tau. Phosphorylation at Ser-573 by BRSK1 and BRSK2 in neurons affects ability to bind microtubules and plays a role in neuron polarization. Phosphorylated by PHK. Dephosphorylation at several serine and threonine residues by the serine/threonine phosphatase PPP5C. Phosphorylation at Ser-204 by SGK1 mediates microtubule depolymerization and neurite formation in hippocampal neurons. In terms of tissue distribution, expressed in neurons. The larger forms (isoform tau-A and isoform tau-B) are preferentially expressed in the peripheral nervous system while the other are expressed in the central nervous system. Low amounts of the larger forms are also found in limited areas of the CNS.

It is found in the cytoplasm. The protein resides in the cytosol. The protein localises to the cell membrane. It localises to the cytoskeleton. Its subcellular location is the cell projection. It is found in the axon. The protein resides in the dendrite. The protein localises to the secreted. Promotes microtubule assembly and stability, and might be involved in the establishment and maintenance of neuronal polarity. The C-terminus binds axonal microtubules while the N-terminus binds neural plasma membrane components, suggesting that tau functions as a linker protein between both. Axonal polarity is predetermined by tau localization (in the neuronal cell) in the domain of the cell body defined by the centrosome. The short isoforms allow plasticity of the cytoskeleton whereas the longer isoforms may preferentially play a role in its stabilization. This is Microtubule-associated protein tau from Rattus norvegicus (Rat).